The following is a 133-amino-acid chain: Protransforming growth factor alpha (133 aa).

Positions 1 to 23 are cleaved as a signal peptide; it reads MVPSAGQLALFALGIFLAVCQAL. Residues 24-38 constitute a propeptide, removed in mature form; the sequence is ENSTSALSDPPVAAA. Topologically, residues 24–97 are extracellular; sequence ENSTSALSDP…AVVAASQKKQ (74 aa). N25 carries an N-linked (GlcNAc...) asparagine glycan. The region spanning 42–82 is the EGF-like domain; that stretch reads HFNDCPDSHTQFCFHGTCRFLLQEEKPACVCHSGYVGARCE. Intrachain disulfides connect C46/C59, C54/C70, and C72/C81. Residues 89–133 constitute a propeptide, removed in mature form; that stretch reads VVAASQKKQAITALVVVTIVALAVLIITCVLIHCCEVRKHSVVVP. Residues 98–120 form a helical membrane-spanning segment; sequence AITALVVVTIVALAVLIITCVLI. Residues 121 to 133 lie on the Cytoplasmic side of the membrane; that stretch reads HCCEVRKHSVVVP.

In terms of assembly, interacts with the PDZ domains of MAGI3, SDCBP and SNTA1. The interaction with SDCBP, is required for the targeting to the cell surface. In the endoplasmic reticulum, in its immature form (i.e. with a prosegment and lacking full N-glycosylation), interacts with CNIH. In the Golgi apparatus, may form a complex with CNIH and GORASP2. Interacts (via cytoplasmic C-terminal domain) with NKD2. As to expression, skin.

It is found in the secreted. The protein localises to the extracellular space. The protein resides in the cell membrane. Functionally, TGF alpha is a mitogenic polypeptide that is able to bind to the EGF receptor/EGFR and to act synergistically with TGF beta to promote anchorage-independent cell proliferation in soft agar. This is Protransforming growth factor alpha (TGFA) from Ovis aries (Sheep).